We begin with the raw amino-acid sequence, 319 residues long: Serpentine receptor class X-43 (319 aa).

7 helical membrane-spanning segments follow: residues 28-48 (VVSM…IGCF), 67-87 (AQLM…LLNI), 95-115 (YLFG…FLLM), 138-158 (IRTF…YLVV), 164-184 (FVFY…CGTL), 194-214 (TVLS…LMAF), and 267-287 (FFFT…VVVF).

The protein belongs to the G-protein coupled receptor 1 family. Expressed in ASI sensory neurons.

It is found in the cell membrane. It localises to the perikaryon. The protein localises to the cell projection. The protein resides in the cilium. Receptor for the ascaroside pheromone icas#9 which suppresses exploratory forgaging behavior. In response to ascaroside icas#9, may furthermore play a role in the expression of genes in the TGF-beta signaling pathway, such as daf-7, and in insulin signaling pathway, such as daf-28, which may in turn contribute to exploratory behavior. This is Serpentine receptor class X-43 from Caenorhabditis elegans.